The chain runs to 296 residues: Nucleotide-binding protein Pnuc_1915 (296 aa).

An ATP-binding site is contributed by 8 to 15; that stretch reads GISGSGKS. Residue 57-60 coordinates GTP; sequence DARR.

The protein belongs to the RapZ-like family.

Displays ATPase and GTPase activities. This is Nucleotide-binding protein Pnuc_1915 from Polynucleobacter asymbioticus (strain DSM 18221 / CIP 109841 / QLW-P1DMWA-1) (Polynucleobacter necessarius subsp. asymbioticus).